A 156-amino-acid polypeptide reads, in one-letter code: Eosinophil cationic protein 2 (156 aa).

The N-terminal stretch at 1-25 (MGPKLLESRLCLLLLLGLVLMLASC) is a signal peptide. Residue His38 is the Proton acceptor of the active site. Intrachain disulfides connect Cys47–Cys106, Cys61–Cys119, Cys79–Cys134, and Cys86–Cys94. Position 62 to 66 (62 to 66 (KGLNT)) interacts with substrate. 3 N-linked (GlcNAc...) asparagine glycosylation sites follow: Asn89, Asn96, and Asn107. The active-site Proton donor is the His151.

This sequence belongs to the pancreatic ribonuclease family.

The protein localises to the cytoplasmic granule. Its function is as follows. Cytotoxin and helminthotoxin with ribonuclease activity. Selectively chemotactic for dendritic cells. Possesses a wide variety of biological activities. This Mus musculus (Mouse) protein is Eosinophil cationic protein 2 (Ear2).